We begin with the raw amino-acid sequence, 296 residues long: Ribosomal RNA small subunit methyltransferase H (296 aa).

S-adenosyl-L-methionine-binding positions include Gly-38–His-40, Glu-57, Phe-88, Asp-103, and His-110.

Belongs to the methyltransferase superfamily. RsmH family.

It is found in the cytoplasm. The enzyme catalyses cytidine(1402) in 16S rRNA + S-adenosyl-L-methionine = N(4)-methylcytidine(1402) in 16S rRNA + S-adenosyl-L-homocysteine + H(+). Its function is as follows. Specifically methylates the N4 position of cytidine in position 1402 (C1402) of 16S rRNA. The protein is Ribosomal RNA small subunit methyltransferase H of Borreliella afzelii (strain PKo) (Borrelia afzelii).